The primary structure comprises 68 residues: Probable Sec-independent protein translocase protein TatE (68 aa).

A helical transmembrane segment spans residues 1 to 21; that stretch reads MGEISITKLLVVAALIILVFG. Residues 43-68 form a disordered region; it reads MNEDDDSAKKTTAEEEAPAQKLSHKE.

It belongs to the TatA/E family. TatE subfamily.

It is found in the cell inner membrane. Its function is as follows. Part of the twin-arginine translocation (Tat) system that transports large folded proteins containing a characteristic twin-arginine motif in their signal peptide across membranes. TatE shares overlapping functions with TatA. In Klebsiella pneumoniae subsp. pneumoniae (strain ATCC 700721 / MGH 78578), this protein is Probable Sec-independent protein translocase protein TatE.